Reading from the N-terminus, the 234-residue chain is MKLLISPINKEEAIIASRGGADIVDVKNPKEGSLGANFPWVIRDVKGAVNGRQPISATIGDFNYKPGTASLAAFGAAVAGADYIKVGLYDIQTEDQALELITKITQAVKDYDSTKKVVASGYSDYKRINSISPLLLPSIAAKAGADVVMVDTGIKDGKSTFEFMDEEELKKFTGLAHECGLENAIAGSLKFEDLPVLERIGPDIIGVRGMVCGGDRTNSIRQELVEKLVAECQA.

Catalysis depends on Lys27, which acts as the Schiff-base intermediate with substrate. The active-site Proton acceptor is the Lys85.

This sequence belongs to the MfnB family.

The enzyme catalyses 2 D-glyceraldehyde 3-phosphate = 4-(hydroxymethyl)-2-furancarboxaldehyde phosphate + phosphate + 2 H2O. It participates in cofactor biosynthesis; methanofuran biosynthesis. Catalyzes the formation of 4-(hydroxymethyl)-2-furancarboxaldehyde phosphate (4-HFC-P) from two molecules of glyceraldehyde-3-P (GA-3-P). The polypeptide is (5-formylfuran-3-yl)methyl phosphate synthase (Methanosarcina barkeri (strain Fusaro / DSM 804)).